The sequence spans 1513 residues: DNA-directed RNA polymerase subunit beta'' (1513 aa).

Positions 220, 296, 303, and 306 each coordinate Zn(2+). A disordered region spans residues 644-769 (RTREKDSENE…EYGNPEEDSV (126 aa)). Residues 659-679 (NEYRTREEECKTLEDEYRTRE) are compositionally biased toward basic and acidic residues. A compositionally biased stretch (acidic residues) spans 680–707 (EEYETLEDEYGIPENEYETLEDEYGILE). The segment covering 726 to 737 (NKYRPREDKYGT) has biased composition (basic and acidic residues). Residues 738–767 (LEEDSEDEHGTLEEDSEEDSEDEYGNPEED) show a composition bias toward acidic residues.

It belongs to the RNA polymerase beta' chain family. RpoC2 subfamily. In plastids the minimal PEP RNA polymerase catalytic core is composed of four subunits: alpha, beta, beta', and beta''. When a (nuclear-encoded) sigma factor is associated with the core the holoenzyme is formed, which can initiate transcription. The cofactor is Zn(2+).

It is found in the plastid. The protein resides in the chloroplast. The enzyme catalyses RNA(n) + a ribonucleoside 5'-triphosphate = RNA(n+1) + diphosphate. Its function is as follows. DNA-dependent RNA polymerase catalyzes the transcription of DNA into RNA using the four ribonucleoside triphosphates as substrates. The chain is DNA-directed RNA polymerase subunit beta'' from Oryza nivara (Indian wild rice).